The primary structure comprises 567 residues: NADH-ubiquinone oxidoreductase chain 2 (567 aa).

Helical transmembrane passes span 2-22 (LILS…IDTI), 43-63 (IGII…LSYI), 85-105 (NIFN…LLSI), 133-153 (LNIY…LLLT), 158-178 (ISIF…TGII), 189-209 (LFYY…ISLL), 236-256 (ILIG…AAPM), 274-294 (YISL…ILNL), 312-332 (LIYI…IGGL), 340-360 (ILAY…LSLI), 372-392 (IIYI…LIIA), 423-443 (LIFC…LFGF), 459-479 (LFLS…YLYF), and 530-550 (VGNY…FNFI).

This sequence belongs to the complex I subunit 2 family.

The protein localises to the mitochondrion inner membrane. It catalyses the reaction a ubiquinone + NADH + 5 H(+)(in) = a ubiquinol + NAD(+) + 4 H(+)(out). Core subunit of the mitochondrial membrane respiratory chain NADH dehydrogenase (Complex I) that is believed to belong to the minimal assembly required for catalysis. Complex I functions in the transfer of electrons from NADH to the respiratory chain. The immediate electron acceptor for the enzyme is believed to be ubiquinone. This chain is NADH-ubiquinone oxidoreductase chain 2 (ND2), found in Wickerhamomyces canadensis (Yeast).